Here is a 351-residue protein sequence, read N- to C-terminus: Terpene cyclase sdgD (351 aa).

9 helical membrane passes run 7 to 27 (INFI…TILI), 62 to 82 (TGVP…WPVI), 89 to 109 (LSLL…LLLL), 126 to 146 (WVGL…YCAI), 160 to 180 (IPHV…LVAL), 193 to 213 (VVVA…FMAS), 229 to 249 (IYIF…LASL), 281 to 301 (FLQW…VAVY), and 316 to 336 (LEVC…LLIW).

It belongs to the membrane-bound ascI terpene cyclase family.

The protein localises to the membrane. It functions in the pathway secondary metabolite biosynthesis. Its function is as follows. Epoxide hydrolase; part of the gene cluster that mediates the biosynthesis of the polyenes aspernidgulenes. The carbon backbone of aspernidgulenes is synthesized by the HR-PKS sdgA, which accepts acetyl-CoA as the starter unit and performs malonyl-CoA extensions as well as regioselective methylation and reduction. The resulting nonaketide offloads the HR-PKS by intramolecular lactonization to yield the 5,6-dihydro-alpha-pyrone-containing hexaenoic acids preaspernidgulene A1 and A2. The FAD-dependent monooxygenase sdgC then installs the first epoxide on the penultimate double bond. Subsequently, the FAD-dependent monooxygenase sdgF presumably generates a ketone intermediate through Meinwald rearrangement involving a hydride shift. Next, sdgC introduces another epoxide on the last olefin of the ketone intermediate after E/Z isomerization. The epoxide hydrolase sdgD then catalyzes stereospecific cyclization of the 5,6-dihydro-alpha-pyrone and opening of the epoxide ring to form an oxygenated trimethylcyclopentanone and an oxabicyclo[2.2.1]heptane unit. Finally, the bicyclic unit undergoes hydrolytic cleavage, either spontaneously or catalyzed by sdgD, to assemble the dimethyl-gamma-lactone moiety in aspernidgulene A1. The protein is Terpene cyclase sdgD of Emericella nidulans (strain FGSC A4 / ATCC 38163 / CBS 112.46 / NRRL 194 / M139) (Aspergillus nidulans).